A 361-amino-acid polypeptide reads, in one-letter code: Phospho-N-acetylmuramoyl-pentapeptide-transferase (361 aa).

Transmembrane regions (helical) follow at residues 10-30 (PGTG…ACLI), 40-60 (LSLP…IGVP), 84-104 (GTPT…GSLV), 107-127 (GDPR…IGGI), 147-167 (LLLQ…HGAI), 175-195 (WGWL…VFLA), 206-226 (LDGL…LQLM), 232-252 (GDPA…GFLL), 260-280 (VFMG…IALL), 288-308 (LLMG…VWVF), and 341-361 (VVVS…VLVP).

This sequence belongs to the glycosyltransferase 4 family. MraY subfamily. It depends on Mg(2+) as a cofactor.

It is found in the cell inner membrane. It carries out the reaction UDP-N-acetyl-alpha-D-muramoyl-L-alanyl-gamma-D-glutamyl-meso-2,6-diaminopimeloyl-D-alanyl-D-alanine + di-trans,octa-cis-undecaprenyl phosphate = di-trans,octa-cis-undecaprenyl diphospho-N-acetyl-alpha-D-muramoyl-L-alanyl-D-glutamyl-meso-2,6-diaminopimeloyl-D-alanyl-D-alanine + UMP. The protein operates within cell wall biogenesis; peptidoglycan biosynthesis. Catalyzes the initial step of the lipid cycle reactions in the biosynthesis of the cell wall peptidoglycan: transfers peptidoglycan precursor phospho-MurNAc-pentapeptide from UDP-MurNAc-pentapeptide onto the lipid carrier undecaprenyl phosphate, yielding undecaprenyl-pyrophosphoryl-MurNAc-pentapeptide, known as lipid I. This Synechococcus sp. (strain RCC307) protein is Phospho-N-acetylmuramoyl-pentapeptide-transferase.